Reading from the N-terminus, the 341-residue chain is Ferrochelatase (341 aa).

Residues histidine 189 and glutamate 293 each contribute to the Fe cation site.

The protein belongs to the ferrochelatase family.

Its subcellular location is the cytoplasm. It carries out the reaction heme b + 2 H(+) = protoporphyrin IX + Fe(2+). Its pathway is porphyrin-containing compound metabolism; protoheme biosynthesis; protoheme from protoporphyrin-IX: step 1/1. Catalyzes the ferrous insertion into protoporphyrin IX. This chain is Ferrochelatase, found in Pseudomonas fluorescens (strain SBW25).